A 429-amino-acid chain; its full sequence is Enolase 1 (429 aa).

Glutamine 163 lines the (2R)-2-phosphoglycerate pocket. The Proton donor role is filled by glutamate 205. The Mg(2+) site is built by aspartate 242, glutamate 287, and aspartate 314. 4 residues coordinate (2R)-2-phosphoglycerate: lysine 339, arginine 368, serine 369, and lysine 390. The active-site Proton acceptor is lysine 339.

Belongs to the enolase family. It depends on Mg(2+) as a cofactor.

It localises to the cytoplasm. Its subcellular location is the secreted. It is found in the cell surface. It carries out the reaction (2R)-2-phosphoglycerate = phosphoenolpyruvate + H2O. Its pathway is carbohydrate degradation; glycolysis; pyruvate from D-glyceraldehyde 3-phosphate: step 4/5. In terms of biological role, catalyzes the reversible conversion of 2-phosphoglycerate (2-PG) into phosphoenolpyruvate (PEP). It is essential for the degradation of carbohydrates via glycolysis. This Cupriavidus metallidurans (strain ATCC 43123 / DSM 2839 / NBRC 102507 / CH34) (Ralstonia metallidurans) protein is Enolase 1.